The chain runs to 344 residues: Succinylglutamate desuccinylase (344 aa).

Positions 63, 66, and 160 each coordinate Zn(2+). Glu-224 is a catalytic residue.

Belongs to the AspA/AstE family. Succinylglutamate desuccinylase subfamily. The cofactor is Zn(2+).

It carries out the reaction N-succinyl-L-glutamate + H2O = L-glutamate + succinate. Its pathway is amino-acid degradation; L-arginine degradation via AST pathway; L-glutamate and succinate from L-arginine: step 5/5. Transforms N(2)-succinylglutamate into succinate and glutamate. The protein is Succinylglutamate desuccinylase of Shewanella putrefaciens (strain CN-32 / ATCC BAA-453).